The following is a 630-amino-acid chain: CREB-regulated transcription coactivator 1 (630 aa).

Phosphoserine occurs at positions 64 and 113. Disordered stretches follow at residues 142–174 (ADTSWRRTNSDSALHQSTMTPTQAESFTGGPQD), 187–221 (GMEETGSETDKTLSKQSWDSKKAGSRPKSCEVPGI), 256–331 (SPLP…LSPL), and 356–475 (QAGS…HTST). Thr149 carries the post-translational modification Phosphothreonine. The residue at position 151 (Ser151) is a Phosphoserine; by SIK1 and SIK2. Over residues 151–167 (SDSALHQSTMTPTQAES) the composition is skewed to polar residues. Thr161 carries the phosphothreonine modification. Residues 194-208 (ETDKTLSKQSWDSKK) show a composition bias toward basic and acidic residues. The short motif at 242–258 (TGGSLPDLSTIHFPSPL) is the Nuclear export signal element. Positions 256 to 270 (SPLPTPLDPEEPPFP) are enriched in pro residues. 2 stretches are compositionally biased toward polar residues: residues 292-301 (GMNTPSSSPQ) and 310-331 (LSLSTEARRQQAQQVPPTLSPL). A compositionally biased stretch (pro residues) spans 361 to 384 (QPPPQPQPPPPPPPVSQQQPPPPQ). Residues 385–394 (VSVGLPQGGP) show a composition bias toward low complexity. 2 stretches are compositionally biased toward polar residues: residues 414–426 (VPSTLPQSPTESP) and 450–475 (PATQSPTSPVSNQGFSPGSSPQHTST).

It belongs to the TORC family. Binds, as a tetramer, through its N-terminal region, with the bZIP domain of CREB1. 'Arg-314' in the bZIP domain of CREB1 is essential for this interaction. Interaction, via its C-terminal, with TAF4, enhances recruitment of TAF4 to CREB1. Interacts with 14-3-3 proteins, including YWHAE/14-3-3 epsilon. Interacts with calmodulin-dependent catalytic subunit PPP3CA/calcineurin A. In terms of processing, phosphorylation/dephosphorylation states of Ser-151 are required for regulating transduction of CREB activity. TORCs are inactive when phosphorylated, and active when dephosphorylated at this site. This primary site of phosphorylation is mediated by SIKs (SIK1 and SIK2), is regulated by cAMP and calcium levels and is dependent on the phosphorylation of SIKs by LKB1. In terms of tissue distribution, highly expressed in developing cortical neurons, peaking during dendrite development.

Its subcellular location is the cytoplasm. The protein localises to the nucleus. In terms of biological role, transcriptional coactivator for CREB1 which activates transcription through both consensus and variant cAMP response element (CRE) sites. Acts as a coactivator, in the SIK/TORC signaling pathway, being active when dephosphorylated and acts independently of CREB1 'Ser-133' phosphorylation. Enhances the interaction of CREB1 with TAF4. Regulates the expression of specific CREB-activated genes such as the steroidogenic gene, StAR. Potent coactivator of PGC1alpha and inducer of mitochondrial biogenesis in muscle cells. In the hippocampus, involved in late-phase long-term potentiation (L-LTP) maintenance at the Schaffer collateral-CA1 synapses. May be required for dendritic growth of developing cortical neurons. In concert with SIK1, regulates the light-induced entrainment of the circadian clock. In response to light stimulus, coactivates the CREB-mediated transcription of PER1 which plays an important role in the photic entrainment of the circadian clock. This Rattus norvegicus (Rat) protein is CREB-regulated transcription coactivator 1 (Crtc1).